We begin with the raw amino-acid sequence, 266 residues long: Small ribosomal subunit protein uS2 (266 aa).

Residues 238 to 266 (EFASAPDAGKKGRQAQPKKGKRASDAAAE) form a disordered region. The segment covering 248–258 (KGRQAQPKKGK) has biased composition (basic residues).

This sequence belongs to the universal ribosomal protein uS2 family.

In Xylella fastidiosa (strain M12), this protein is Small ribosomal subunit protein uS2.